A 488-amino-acid chain; its full sequence is (Z)-2-((N-methylformamido)methylene)-5-hydroxybutyrolactone dehydrogenase (488 aa).

NAD(+) is bound by residues 149–150 and 226–227; these read WN and GG. Glu-248 acts as the Proton acceptor in catalysis. Residue Leu-249 participates in NAD(+) binding. The active-site Nucleophile is the Cys-282. Residue Glu-380 coordinates NAD(+).

It belongs to the aldehyde dehydrogenase family. As to quaternary structure, homodimer.

The catalysed reaction is (Z)-2-((N-methylformamido)methylene)-5-hydroxybutanolactone + NAD(+) + H2O = (E)-2-((N-methylformamido) methylene)succinate + NADH + 3 H(+). Its function is as follows. Involved in the degradation of the pyridine ring of trigonelline (TG; N-methylnicotinate) into succinate and methylamine as carbon and nitrogen sources, respectively. Catalyzes the NAD(+)-dependent oxidation of (Z)-2-((N-methylformamido)methylene)-5-hydroxybutyrolactone (MFMB) to yield (E)-2-((N-methylformamido)methylene)succinate (MFMS). The sequence is that of (Z)-2-((N-methylformamido)methylene)-5-hydroxybutyrolactone dehydrogenase from Acinetobacter baylyi (strain ATCC 33305 / BD413 / ADP1).